A 98-amino-acid polypeptide reads, in one-letter code: MPQDCACRKTDRYVSFQDIDCTGNARRLMEHLDRQLSIPGRSTAFWEYFAKKRAGSAAAKPDDLFLIHSNINQFREFFEQWNDSDALSLLLQIEEECC.

This sequence belongs to the CowN family.

Its function is as follows. Is required to sustain N(2)-dependent growth in the presence of low levels of carbon monoxide (CO). Probably acts by protecting the N(2) fixation ability of the nitrogenase complex, which is inactivated in the presence of CO. This Dechloromonas aromatica (strain RCB) protein is N(2)-fixation sustaining protein CowN.